The chain runs to 218 residues: Probable transaldolase (218 aa).

Residue K87 is the Schiff-base intermediate with substrate of the active site.

Belongs to the transaldolase family. Type 3B subfamily.

It is found in the cytoplasm. It catalyses the reaction D-sedoheptulose 7-phosphate + D-glyceraldehyde 3-phosphate = D-erythrose 4-phosphate + beta-D-fructose 6-phosphate. The protein operates within carbohydrate degradation; pentose phosphate pathway; D-glyceraldehyde 3-phosphate and beta-D-fructose 6-phosphate from D-ribose 5-phosphate and D-xylulose 5-phosphate (non-oxidative stage): step 2/3. Transaldolase is important for the balance of metabolites in the pentose-phosphate pathway. This chain is Probable transaldolase, found in Bacteroides thetaiotaomicron (strain ATCC 29148 / DSM 2079 / JCM 5827 / CCUG 10774 / NCTC 10582 / VPI-5482 / E50).